Consider the following 273-residue polypeptide: Peptide deformylase 1B, chloroplastic/mitochondrial (273 aa).

The transit peptide at 1–56 directs the protein to the chloroplast and mitochondrion; the sequence is MAVCNCFLQAPPLSRILLPVLSRRATTLSAGYGRLKSTVTFCSTVNRTSPLTSSVR. Residues Cys-171 and His-213 each contribute to the Fe cation site. Glu-214 is a catalytic residue. His-217 lines the Fe cation pocket. Positions 246-261 are enriched in basic and acidic residues; the sequence is YEEKTGLPSPERVEAR. Residues 246 to 273 are disordered; sequence YEEKTGLPSPERVEARQKRKAGVGFGKR. The span at 262 to 273 shows a compositional bias: basic residues; sequence QKRKAGVGFGKR.

Belongs to the polypeptide deformylase family. In terms of assembly, homodimer. Fe(2+) serves as cofactor. Expressed in leaves and flowers.

It is found in the plastid. It localises to the chloroplast stroma. The protein resides in the mitochondrion. It carries out the reaction N-terminal N-formyl-L-methionyl-[peptide] + H2O = N-terminal L-methionyl-[peptide] + formate. Its activity is regulated as follows. Inhibited by actinonin. Removes the formyl group from the N-terminal Met of newly synthesized proteins. Has a preferred substrate specificity towards the photosystem II (PS II) D1 polypeptide. In Arabidopsis thaliana (Mouse-ear cress), this protein is Peptide deformylase 1B, chloroplastic/mitochondrial (PDF1B).